Consider the following 503-residue polypeptide: Aspartyl/glutamyl-tRNA(Asn/Gln) amidotransferase subunit B (503 aa).

Belongs to the GatB/GatE family. GatB subfamily. In terms of assembly, heterotrimer of A, B and C subunits.

It catalyses the reaction L-glutamyl-tRNA(Gln) + L-glutamine + ATP + H2O = L-glutaminyl-tRNA(Gln) + L-glutamate + ADP + phosphate + H(+). The enzyme catalyses L-aspartyl-tRNA(Asn) + L-glutamine + ATP + H2O = L-asparaginyl-tRNA(Asn) + L-glutamate + ADP + phosphate + 2 H(+). Allows the formation of correctly charged Asn-tRNA(Asn) or Gln-tRNA(Gln) through the transamidation of misacylated Asp-tRNA(Asn) or Glu-tRNA(Gln) in organisms which lack either or both of asparaginyl-tRNA or glutaminyl-tRNA synthetases. The reaction takes place in the presence of glutamine and ATP through an activated phospho-Asp-tRNA(Asn) or phospho-Glu-tRNA(Gln). The sequence is that of Aspartyl/glutamyl-tRNA(Asn/Gln) amidotransferase subunit B from Mycobacterium avium (strain 104).